The sequence spans 71 residues: MFTMKKPLLLLFFLGTINLSLCEEERNADEEEKRDGDDEMDAEVEKRFLPAVLKVAAHILPTAICAISRRC.

An N-terminal signal peptide occupies residues 1-22 (MFTMKKPLLLLFFLGTINLSLC). A propeptide spans 23–45 (EEERNADEEEKRDGDDEMDAEVE) (removed in mature form). A disulfide bridge links C65 with C71.

The protein belongs to the frog skin active peptide (FSAP) family. Brevinin subfamily. In terms of tissue distribution, expressed by the skin glands.

The protein localises to the secreted. Antimicrobial peptide. Active against some Gram-negative and a variety of Gram-positive bacterial strains. Active against fungus C.glabrata 090902 but not against C.albicans ATCC 10231. Shows hemolytic activity against human erythrocytes. This Sylvirana spinulosa (Fine-spined frog) protein is Brevinin-1SN1.